Reading from the N-terminus, the 279-residue chain is 4-diphosphocytidyl-2-C-methyl-D-erythritol kinase (279 aa).

Residue Lys-9 is part of the active site. Position 92–102 (92–102 (PLAAGLGGGSS)) interacts with ATP. Asp-134 is an active-site residue.

This sequence belongs to the GHMP kinase family. IspE subfamily.

It carries out the reaction 4-CDP-2-C-methyl-D-erythritol + ATP = 4-CDP-2-C-methyl-D-erythritol 2-phosphate + ADP + H(+). It functions in the pathway isoprenoid biosynthesis; isopentenyl diphosphate biosynthesis via DXP pathway; isopentenyl diphosphate from 1-deoxy-D-xylulose 5-phosphate: step 3/6. Its function is as follows. Catalyzes the phosphorylation of the position 2 hydroxy group of 4-diphosphocytidyl-2C-methyl-D-erythritol. This chain is 4-diphosphocytidyl-2-C-methyl-D-erythritol kinase, found in Syntrophus aciditrophicus (strain SB).